The chain runs to 194 residues: Peptide deformylase (194 aa).

The interval 71–93 is disordered; that stretch reads DAEPEECGHDHGDGEGAHKHYPV. The segment covering 76–93 has biased composition (basic and acidic residues); sequence ECGHDHGDGEGAHKHYPV. Residues C119 and H161 each contribute to the Fe cation site. E162 is an active-site residue. H165 is a Fe cation binding site.

It belongs to the polypeptide deformylase family. Fe(2+) serves as cofactor.

It carries out the reaction N-terminal N-formyl-L-methionyl-[peptide] + H2O = N-terminal L-methionyl-[peptide] + formate. In terms of biological role, removes the formyl group from the N-terminal Met of newly synthesized proteins. Requires at least a dipeptide for an efficient rate of reaction. N-terminal L-methionine is a prerequisite for activity but the enzyme has broad specificity at other positions. The sequence is that of Peptide deformylase from Erythrobacter litoralis (strain HTCC2594).